A 90-amino-acid chain; its full sequence is MSSGGLLLLLGLLTLWAELTPISGHDRPKFCYLPADPGECLAHMRSFYYDSESKKCKEFIYGGCHGNANKFPSRDKCRQTCGASAKGRPT.

Positions 1 to 24 (MSSGGLLLLLGLLTLWAELTPISG) are cleaved as a signal peptide. In terms of domain architecture, BPTI/Kunitz inhibitor spans 31–81 (CYLPADPGECLAHMRSFYYDSESKKCKEFIYGGCHGNANKFPSRDKCRQTC). 3 cysteine pairs are disulfide-bonded: C31–C81, C40–C64, and C56–C77. Positions 85–90 (AKGRPT) are excised as a propeptide.

The protein belongs to the venom Kunitz-type family. As to expression, expressed by the venom gland.

It is found in the secreted. Functionally, serine protease inhibitor. In Daboia siamensis (Eastern Russel's viper), this protein is Kunitz-type serine protease inhibitor B5.